A 553-amino-acid polypeptide reads, in one-letter code: Arginine--tRNA ligase (553 aa).

A 'HIGH' region motif is present at residues 122–132; it reads ANPTGFLHVGH.

The protein belongs to the class-I aminoacyl-tRNA synthetase family. As to quaternary structure, monomer.

It localises to the cytoplasm. The catalysed reaction is tRNA(Arg) + L-arginine + ATP = L-arginyl-tRNA(Arg) + AMP + diphosphate. In Mesoplasma florum (strain ATCC 33453 / NBRC 100688 / NCTC 11704 / L1) (Acholeplasma florum), this protein is Arginine--tRNA ligase.